A 644-amino-acid polypeptide reads, in one-letter code: Acetolactate synthase 1, chloroplastic (644 aa).

The N-terminal 43 residues, 1–43 (MATTAAAAAAALSAAATAKTGRKNHQRHHVLPARGRVGAAAVR), are a transit peptide targeting the chloroplast. Positions 47-67 (VSPVTPPSPAPPATPLRPWGP) are disordered. The span at 50–61 (VTPPSPAPPATP) shows a compositional bias: pro residues. Thiamine diphosphate is bound at residue Glu-118. A disulfide bridge links Cys-138 with Cys-284. FAD contacts are provided by residues Arg-220, 326–347 (HGTVYANYAVDKADLLLAFGVR), and 369–388 (DIDPAEIGKNKQPHVSICAD). A thiamine pyrophosphate binding region spans residues 461 to 541 (QHQMWAAQYY…VKVMVLNNQH (81 aa)). Residues Asp-512 and Asn-539 each coordinate Mg(2+).

The protein belongs to the TPP enzyme family. Mg(2+) serves as cofactor. Thiamine diphosphate is required as a cofactor.

The protein localises to the plastid. Its subcellular location is the chloroplast. The catalysed reaction is 2 pyruvate + H(+) = (2S)-2-acetolactate + CO2. Its pathway is amino-acid biosynthesis; L-isoleucine biosynthesis; L-isoleucine from 2-oxobutanoate: step 1/4. The protein operates within amino-acid biosynthesis; L-valine biosynthesis; L-valine from pyruvate: step 1/4. This Oryza sativa subsp. japonica (Rice) protein is Acetolactate synthase 1, chloroplastic (ALS1).